The primary structure comprises 415 residues: MDLQSLGKLAKEASYELAITGSEKKNAALEAIALALEANQDKIVSANKEDIQAGKEAGLTEALLDRLLLDETRLAGVVSDVRSVIKLDDPVGEEFDGKLLENGLKLSKRRVPIGVIGVIYEARPNVTIDIAVLSLKTGNACILRGGKETIRSNIVLVEVIQAALKSVGLPETSVQYIKSTDRALVGELLKMDDYVDMIIPRGNAGLQKFCKENSNIPVIVGGIGVCHLFADKSVDQEKALAIVANAKVQRPTVCNALETLLVHQDIAEEFLPKLHAHLAPMGVTLIAEEKAKAILGDKATLAEAGDFDREWLCLNLGVKVVADFHEAIMHIRTHSSGHSDGILTNDFTIANKFINVVNSAAVYINASTRFTDGSQFGLGAEVAVSTQKLHARGPMGLQELTTYKWIGIGENLIRP.

This sequence belongs to the gamma-glutamyl phosphate reductase family.

The protein localises to the cytoplasm. It catalyses the reaction L-glutamate 5-semialdehyde + phosphate + NADP(+) = L-glutamyl 5-phosphate + NADPH + H(+). Its pathway is amino-acid biosynthesis; L-proline biosynthesis; L-glutamate 5-semialdehyde from L-glutamate: step 2/2. Its function is as follows. Catalyzes the NADPH-dependent reduction of L-glutamate 5-phosphate into L-glutamate 5-semialdehyde and phosphate. The product spontaneously undergoes cyclization to form 1-pyrroline-5-carboxylate. The polypeptide is Gamma-glutamyl phosphate reductase (Psychromonas ingrahamii (strain DSM 17664 / CCUG 51855 / 37)).